An 83-amino-acid polypeptide reads, in one-letter code: Small ribosomal subunit protein bS20 (83 aa).

The tract at residues 1–21 (MPNIKSAIKRVRTTETAEERN) is disordered. Basic and acidic residues predominate over residues 12–21 (RTTETAEERN).

Belongs to the bacterial ribosomal protein bS20 family.

Functionally, binds directly to 16S ribosomal RNA. The sequence is that of Small ribosomal subunit protein bS20 from Staphylococcus epidermidis (strain ATCC 35984 / DSM 28319 / BCRC 17069 / CCUG 31568 / BM 3577 / RP62A).